A 937-amino-acid polypeptide reads, in one-letter code: Protein Niban 1 (937 aa).

Glycine 2 is lipidated: N-myristoyl glycine. Serine 578, serine 581, serine 595, serine 601, and serine 646 each carry phosphoserine. A compositionally biased stretch (polar residues) spans 584-595; the sequence is DLKTSMGSNQAS. Disordered regions lie at residues 584–710 and 724–891; these read DLKT…GSLR and SAPE…LGGN. A compositionally biased stretch (low complexity) spans 640-651; sequence ASISGSSPPSGE. Residues 655-681 show a composition bias toward polar residues; the sequence is VSVSGVDNSAGNPLSADNSAGPLSSHL. The segment covering 688–701 has biased composition (basic and acidic residues); that stretch reads EPPKDEETAHKRPE. Residues serine 708 and serine 768 each carry the phosphoserine modification. Composition is skewed to polar residues over residues 802 to 817 and 855 to 869; these read PTSQ…NTSC and VTVT…SSNP.

This sequence belongs to the Niban family. Detected in brain, lung, spleen and skeletal muscle. Expressed in small renal tumors but not in normal kidney.

Its subcellular location is the cytoplasm. The protein localises to the membrane. Functionally, regulates phosphorylation of a number of proteins involved in translation regulation including EIF2A, EIF4EBP1 and RPS6KB1. May be involved in the endoplasmic reticulum stress response. In Rattus norvegicus (Rat), this protein is Protein Niban 1.